The chain runs to 325 residues: Malate dehydrogenase (325 aa).

9–15 is an NAD(+) binding site; the sequence is GAAGAIG. Substrate-binding residues include arginine 90 and arginine 96. NAD(+) is bound by residues asparagine 103, glutamine 110, and 127-129; that span reads VGN. Residues asparagine 129 and arginine 160 each coordinate substrate. Histidine 185 acts as the Proton acceptor in catalysis.

It belongs to the LDH/MDH superfamily. MDH type 2 family.

The catalysed reaction is (S)-malate + NAD(+) = oxaloacetate + NADH + H(+). In terms of biological role, catalyzes the reversible oxidation of malate to oxaloacetate. The protein is Malate dehydrogenase of Rubrobacter xylanophilus (strain DSM 9941 / JCM 11954 / NBRC 16129 / PRD-1).